The primary structure comprises 271 residues: D-methionine-binding lipoprotein MetQ (271 aa).

A signal peptide spans 1–22 (MAFKFKTFAAVGALIGSLALVG). C23 is lipidated: N-palmitoyl cysteine. C23 carries the S-diacylglycerol cysteine lipid modification.

This sequence belongs to the NlpA lipoprotein family.

The protein resides in the cell membrane. In terms of biological role, this protein is a component of a D-methionine permease, a binding protein-dependent, ATP-driven transport system. This Escherichia coli (strain K12) protein is D-methionine-binding lipoprotein MetQ (metQ).